A 97-amino-acid chain; its full sequence is YcgL domain-containing protein PputGB1_4120 (97 aa).

One can recognise a YcgL domain in the interval 3-87; it reads RICSIYKSPR…AEDEYIEHLP (85 aa).

The chain is YcgL domain-containing protein PputGB1_4120 from Pseudomonas putida (strain GB-1).